The chain runs to 78 residues: Large ribosomal subunit protein bL28 (78 aa).

This sequence belongs to the bacterial ribosomal protein bL28 family.

The sequence is that of Large ribosomal subunit protein bL28 from Ruthia magnifica subsp. Calyptogena magnifica.